Consider the following 120-residue polypeptide: Aspartate 1-decarboxylase (120 aa).

Residue Ser25 is the Schiff-base intermediate with substrate; via pyruvic acid of the active site. At Ser25 the chain carries Pyruvic acid (Ser). Thr57 contributes to the substrate binding site. Tyr58 serves as the catalytic Proton donor. 73-75 serves as a coordination point for substrate; the sequence is GAA.

The protein belongs to the PanD family. In terms of assembly, heterooctamer of four alpha and four beta subunits. Pyruvate serves as cofactor. In terms of processing, is synthesized initially as an inactive proenzyme, which is activated by self-cleavage at a specific serine bond to produce a beta-subunit with a hydroxyl group at its C-terminus and an alpha-subunit with a pyruvoyl group at its N-terminus.

It localises to the cytoplasm. The enzyme catalyses L-aspartate + H(+) = beta-alanine + CO2. Its pathway is cofactor biosynthesis; (R)-pantothenate biosynthesis; beta-alanine from L-aspartate: step 1/1. Its function is as follows. Catalyzes the pyruvoyl-dependent decarboxylation of aspartate to produce beta-alanine. The sequence is that of Aspartate 1-decarboxylase from Ralstonia pickettii (strain 12J).